Reading from the N-terminus, the 310-residue chain is tRNA dimethylallyltransferase (310 aa).

13-20 (GPTASGKT) lines the ATP pocket. 15–20 (TASGKT) contacts substrate. Interaction with substrate tRNA regions lie at residues 38–41 (DSAL), 162–166 (QRLSR), 243–248 (RCVGYR), and 276–283 (KRQITWLR).

Belongs to the IPP transferase family. In terms of assembly, monomer. The cofactor is Mg(2+).

It catalyses the reaction adenosine(37) in tRNA + dimethylallyl diphosphate = N(6)-dimethylallyladenosine(37) in tRNA + diphosphate. Its function is as follows. Catalyzes the transfer of a dimethylallyl group onto the adenine at position 37 in tRNAs that read codons beginning with uridine, leading to the formation of N6-(dimethylallyl)adenosine (i(6)A). The protein is tRNA dimethylallyltransferase of Aliivibrio fischeri (strain MJ11) (Vibrio fischeri).